The chain runs to 3461 residues: Reelin (3461 aa).

Positions 1–26 (MERGCWAPRALVLAVLLLLATLRARA) are cleaved as a signal peptide. Residues 27–191 (ATGYYPRFSP…GAPTEATAYS (165 aa)) form the Reelin domain. A disulfide bridge connects residues C41 and C127. A glycan (N-linked (GlcNAc...) asparagine) is linked at N141. A disulfide bond links C155 and C179. N-linked (GlcNAc...) asparagine glycans are attached at residues N258, N290, and N306. C540 and C581 form a disulfide bridge. A BNR 1 repeat occupies 593–604 (EFSTNHGRSWSL). C609 and C614 are oxidised to a cystine. An N-linked (GlcNAc...) asparagine glycan is attached at N629. In terms of domain architecture, EGF-like 1 spans 671-702 (IGPSCLKFCSGRGQCTRHGCKCDPGFSGPACE). 2 disulfides stabilise this stretch: C675–C685 and C692–C701. The BNR 2 repeat unit spans residues 799–810 (HYSYDNGITWKL). C895 and C937 form a disulfide bridge. The stretch at 952–963 (EYSANHGLTWHL) is one BNR 3 repeat. 3 disulfide bridges follow: C968/C975, C1034/C1044, and C1051/C1060. An EGF-like 2 domain is found at 1030-1061 (IGQQCPNMCSGHGSCDHGVCRCDQGYQGTECH). Residues 1157-1168 (QYSNNGGIQWHL) form a BNR 4 repeat. N-linked (GlcNAc...) asparagine glycosylation occurs at N1267. One copy of the BNR 5 repeat lies at 1323–1334 (QYSHDAGMSWFL). Cystine bridges form between C1339–C1348, C1413–C1423, C1417–C1428, and C1430–C1441. Residues 1409–1442 (ISEPCPSYCSGHGDCISGVCFCDLGYTAAQGTCV) form the EGF-like 3 domain. An N-linked (GlcNAc...) asparagine glycan is attached at N1447. C1475 and C1522 form a disulfide bridge. One copy of the BNR 6 repeat lies at 1535-1546 (QYSNDNGILWHL). N1600 carries N-linked (GlcNAc...) asparagine glycosylation. C1633 and C1673 form a disulfide bridge. The stretch at 1686-1697 (QYSLNNGKDWQL) is one BNR 7 repeat. An intrachain disulfide couples C1702 to C1709. N-linked (GlcNAc...) asparagine glycosylation is present at N1750. The EGF-like 4 domain maps to 1765-1796 (LASGCPWMCSGRGICDSGRCVCDRGFGGPFCV). The BNR 8 repeat unit spans residues 1884-1895 (QFSVSGGVTWHL). N1921 is a glycosylation site (N-linked (GlcNAc...) asparagine). A disulfide bond links C1983 and C2030. A BNR 9 repeat occupies 2043–2054 (EFSRDFGATWHL). C2059 and C2070 are disulfide-bonded. H2061 and H2074 together coordinate Zn(2+). Residues 2129 to 2161 (IGPQCEEMCYGHGSCINGTKCICDPGYSGPTCK) form the EGF-like 5 domain. Intrachain disulfides connect C2133/C2143, C2137/C2149, and C2151/C2160. N-linked (GlcNAc...) asparagine glycosylation is present at N2145. E2179 provides a ligand contact to Zn(2+). Cysteines 2195 and 2235 form a disulfide. Residues 2250-2261 (QYSLNGGLSWSL) form a BNR 10 repeat. E2264 contributes to the Zn(2+) binding site. Residues N2269 and N2317 are each glycosylated (N-linked (GlcNAc...) asparagine). Intrachain disulfides connect C2348-C2387, C2393-C2559, C2482-C2492, C2486-C2497, C2499-C2508, and C2544-C2584. Zn(2+) contacts are provided by E2397, E2399, and H2460. The BNR 11 repeat unit spans residues 2399 to 2410 (EYSVDLGLSWHP). The EGF-like 6 domain maps to 2478-2509 (IGDGCLDMCSGHGRCVQGSCVCDEQWGGLYCD). Residue N2569 is glycosylated (N-linked (GlcNAc...) asparagine). BNR repeat units follow at residues 2598-2609 (EYSVNGGITWNL) and 2778-2789 (QFSTDFGVSWSY). C2794 and C2801 are disulfide-bonded. The EGF-like 7 domain maps to 2853-2884 (LGPGCLDNCGGHGDCLKEQCICDPGYSGPNCY). The cysteines at positions 2919 and 2966 are disulfide-linked. The N-linked (GlcNAc...) asparagine glycan is linked to N2962. A BNR 14 repeat occupies 2979-2990 (DFSTDGGITWTL). N-linked (GlcNAc...) asparagine glycosylation is found at N3016 and N3073. The BNR 15 repeat unit spans residues 3143-3155 (EYTKDARSDSWQL). Residues C3160 and C3170 are joined by a disulfide bond. An N-linked (GlcNAc...) asparagine glycan is attached at N3185. Positions 3228 to 3260 (IGEACPKLCSGHGYCTTGAVCICDESFQGDDCS) constitute an EGF-like 8 domain. 4 disulfide bridges follow: C3232–C3242, C3236–C3248, C3250–C3259, and C3296–C3346. The BNR 16 repeat unit spans residues 3363–3374 (QYSVNNGITWHV). N-linked (GlcNAc...) asparagine glycosylation is found at N3412 and N3439.

The protein belongs to the reelin family. Oligomer of disulfide-linked homodimers. N-glycosylated and to a lesser extent also O-glycosylated. As to expression, the major isoform 1 is neuron-specific. It is abundantly produced during brain ontogenesis by the Cajal-Retzius cells and other pioneer neurons located in the telencephalic marginal zone and by granule cells of the external granular layer of the cerebellum. Expression is located in deeper layers in the developing hippocampus and olfactory bulb, low levels of expression are also detected in the immature striatum. At early developmental stages, expressed also in hypothalamic differentiation fields, tectum and spinal cord. A moderate to low level of expression occurs in the septal area, striatal fields, habenular nuclei, some thalamic nuclei, particularly the lateral geniculate, the retina and some nuclei of the reticular formation in the central field of the medulla. Very low levels found in liver and kidney. No expression in radial glial cells, cortical plate, Purkinje cells and inferior olivary neurons. The minor isoform 2 is only expressed in non neuronal cells. The minor isoform 3 is found in the same cells as isoform 1, but is almost undetectable in retina and brain stem.

It localises to the secreted. It is found in the extracellular space. Its subcellular location is the extracellular matrix. In terms of biological role, extracellular matrix serine protease secreted by pioneer neurons that plays a role in layering of neurons in the cerebral cortex and cerebellum by coordinating cell positioning during neurodevelopment. Regulates microtubule function in neurons and neuronal migration. Binding to the extracellular domains of lipoprotein receptors VLDLR and LRP8/APOER2 induces tyrosine phosphorylation of DAB1 and modulation of TAU phosphorylation. Affects migration of sympathetic preganglionic neurons in the spinal cord, where it seems to act as a barrier to neuronal migration. Enzymatic activity is important for the modulation of cell adhesion. The protein is Reelin (Reln) of Mus musculus (Mouse).